The chain runs to 681 residues: Transferrin (681 aa).

Positions Met-1–Ala-18 are cleaved as a signal peptide. Transferrin-like domains lie at Tyr-23–His-364 and Val-371–Ser-676. Intrachain disulfides connect Cys-26/Cys-60 and Cys-35/Cys-51. Fe(3+) contacts are provided by Asp-75 and Tyr-108. 4 disulfide bridges follow: Cys-132/Cys-228, Cys-181/Cys-207, Cys-204/Cys-213, and Cys-271/Cys-284. Hydrogencarbonate-binding residues include Thr-134, Arg-138, Val-140, and Gly-141. Asn-218 is a glycosylation site (N-linked (GlcNAc...) asparagine). Residue Tyr-222 coordinates Fe(3+). Asn-355 carries an N-linked (GlcNAc...) asparagine glycan. Intrachain disulfides connect Cys-374–Cys-411 and Cys-384–Cys-402. Asn-418 carries N-linked (GlcNAc...) asparagine glycosylation. 3 disulfide bridges follow: Cys-478-Cys-551, Cys-506-Cys-678, and Cys-579-Cys-596.

The protein belongs to the transferrin family.

It localises to the secreted. Functionally, transferrins are iron binding transport proteins which bind Fe(3+) ion in association with the binding of an anion, usually bicarbonate. This transferrin binds only one Fe(3+) ion per protein molecule. This is Transferrin from Manduca sexta (Tobacco hawkmoth).